The primary structure comprises 1267 residues: Eukaryotic translation initiation factor 3 subunit A (1267 aa).

Residues 82 to 118 adopt a coiled-coil conformation; sequence NIKSLEDVVRAYLKLAEEKTETAKEESQQMVLDIEDL. The 184-residue stretch at 315 to 498 folds into the PCI domain; it reads MQRMSTRVLL…RTLSFGSDLN (184 aa). Basic and acidic residues-rich tracts occupy residues 792 to 835, 844 to 1086, and 1098 to 1147; these read EERK…LEQE, YQER…DSRP, and WRER…EGSA. The segment at 792–1267 is disordered; the sequence is EERKKQRKED…DDDGWTTVRR (476 aa). A run of 3 repeats spans residues 956–965, 966–975, and 976–985. Residues 956–1073 form a 12 X 10 AA approximate tandem repeats of D-[DE]-[DE]-R-[GP]-[GPQT]-R-R-[GPS]-[ADFGIM] region; sequence DDDRGPRRGG…DDERGGRRGM (118 aa). The 4; truncated repeat unit spans residues 986-994; that stretch reads DDDRGQRRG. A run of 2 repeats spans residues 995-1004 and 1005-1014. The stretch at 1015 to 1023 is one 7; truncated repeat; that stretch reads DDDRGPRRS. Repeat copies occupy residues 1024-1033 and 1034-1043. A 10; approximate repeat occupies 1044–1053; that stretch reads DEPRGPRRGA. Residues 1054–1063 form repeat 11; the sequence is DDDWGPRRGG. The 12; approximate repeat unit spans residues 1064–1073; the sequence is DDERGGRRGM. Gly residues predominate over residues 1150–1159; the sequence is RGGGGGGGGE. Over residues 1162 to 1256 the composition is skewed to basic and acidic residues; that stretch reads SSWRDSRRED…KENPRRTKNE (95 aa).

The protein belongs to the eIF-3 subunit A family. In terms of assembly, component of the eukaryotic translation initiation factor 3 (eIF-3) complex, which is composed of 13 subunits: eif3a, eif3b, eif3c, eif3d, eif3e, eif3f, eif3g, eif3h, eif3i, eif3j, eif3k, eif3l and eif3m.

The protein resides in the cytoplasm. Its function is as follows. RNA-binding component of the eukaryotic translation initiation factor 3 (eIF-3) complex, which is involved in protein synthesis of a specialized repertoire of mRNAs and, together with other initiation factors, stimulates binding of mRNA and methionyl-tRNAi to the 40S ribosome. The eIF-3 complex specifically targets and initiates translation of a subset of mRNAs involved in cell proliferation. The polypeptide is Eukaryotic translation initiation factor 3 subunit A (eif3a) (Danio rerio (Zebrafish)).